The chain runs to 255 residues: Coenzyme F420:L-glutamate ligase (255 aa).

GTP-binding positions include 11–14 (IPLI), 40–41 (ST), and lysine 45. Aspartate 109 is an a divalent metal cation binding site. Residue asparagine 112 coordinates GTP. A divalent metal cation contacts are provided by aspartate 150, threonine 151, and glutamate 208. Residue 206 to 213 (MGEGAGGT) participates in GTP binding.

This sequence belongs to the CofE family. In terms of assembly, homodimer. The cofactor is Mg(2+). Mn(2+) serves as cofactor. It depends on K(+) as a cofactor.

The catalysed reaction is oxidized coenzyme F420-0 + GTP + L-glutamate = oxidized coenzyme F420-1 + GDP + phosphate + H(+). It carries out the reaction oxidized coenzyme F420-1 + GTP + L-glutamate = oxidized coenzyme F420-2 + GDP + phosphate + H(+). The protein operates within cofactor biosynthesis; coenzyme F420 biosynthesis. Functionally, catalyzes the GTP-dependent successive addition of two or more gamma-linked L-glutamates to the L-lactyl phosphodiester of 7,8-didemethyl-8-hydroxy-5-deazariboflavin (F420-0) to form coenzyme F420-0-glutamyl-glutamate (F420-2) or polyglutamated F420 derivatives. The protein is Coenzyme F420:L-glutamate ligase of Methanosarcina barkeri (strain Fusaro / DSM 804).